The following is a 94-amino-acid chain: Putative pterin-4-alpha-carbinolamine dehydratase (94 aa).

It belongs to the pterin-4-alpha-carbinolamine dehydratase family.

The catalysed reaction is (4aS,6R)-4a-hydroxy-L-erythro-5,6,7,8-tetrahydrobiopterin = (6R)-L-erythro-6,7-dihydrobiopterin + H2O. This chain is Putative pterin-4-alpha-carbinolamine dehydratase, found in Mycobacteroides abscessus (strain ATCC 19977 / DSM 44196 / CCUG 20993 / CIP 104536 / JCM 13569 / NCTC 13031 / TMC 1543 / L948) (Mycobacterium abscessus).